Reading from the N-terminus, the 96-residue chain is MLILSVFCAVFYAFLTAIVANFSLKTLAIGATFVKSHLKSNPIPYGDLVADSLDFGNITPTVTLLFAILIAVLALKCEFSCSTSAPAGQASGRKVK.

An N-terminal signal peptide occupies residues Met1–Gly30. The Extracellular portion of the chain corresponds to Ala31 to Asp54. A helical membrane pass occupies residues Phe55 to Leu75. Over Lys76 to Lys96 the chain is Cytoplasmic.

The protein resides in the membrane. This is an uncharacterized protein from Dictyostelium discoideum (Social amoeba).